We begin with the raw amino-acid sequence, 289 residues long: Acetyl-coenzyme A carboxylase carboxyl transferase subunit beta (289 aa).

In terms of domain architecture, CoA carboxyltransferase N-terminal spans 23-289 (HWIKCPSCSA…YDENPCLLHL (267 aa)). Residues C27, C30, C46, and C49 each contribute to the Zn(2+) site. The C4-type zinc finger occupies 27–49 (CPSCSALMYYKEVIAQHHVCPKC).

Belongs to the AccD/PCCB family. As to quaternary structure, acetyl-CoA carboxylase is a heterohexamer composed of biotin carboxyl carrier protein (AccB), biotin carboxylase (AccC) and two subunits each of ACCase subunit alpha (AccA) and ACCase subunit beta (AccD). Zn(2+) is required as a cofactor.

Its subcellular location is the cytoplasm. It carries out the reaction N(6)-carboxybiotinyl-L-lysyl-[protein] + acetyl-CoA = N(6)-biotinyl-L-lysyl-[protein] + malonyl-CoA. The protein operates within lipid metabolism; malonyl-CoA biosynthesis; malonyl-CoA from acetyl-CoA: step 1/1. In terms of biological role, component of the acetyl coenzyme A carboxylase (ACC) complex. Biotin carboxylase (BC) catalyzes the carboxylation of biotin on its carrier protein (BCCP) and then the CO(2) group is transferred by the transcarboxylase to acetyl-CoA to form malonyl-CoA. The chain is Acetyl-coenzyme A carboxylase carboxyl transferase subunit beta from Wolinella succinogenes (strain ATCC 29543 / DSM 1740 / CCUG 13145 / JCM 31913 / LMG 7466 / NCTC 11488 / FDC 602W) (Vibrio succinogenes).